Here is a 382-residue protein sequence, read N- to C-terminus: Alkanesulfonate monooxygenase (382 aa).

Belongs to the SsuD family.

The catalysed reaction is an alkanesulfonate + FMNH2 + O2 = an aldehyde + FMN + sulfite + H2O + 2 H(+). Functionally, catalyzes the desulfonation of aliphatic sulfonates. The chain is Alkanesulfonate monooxygenase from Pseudomonas sp.